A 156-amino-acid chain; its full sequence is Small ribosomal subunit protein uS7 (156 aa).

It belongs to the universal ribosomal protein uS7 family. Part of the 30S ribosomal subunit. Contacts proteins S9 and S11.

One of the primary rRNA binding proteins, it binds directly to 16S rRNA where it nucleates assembly of the head domain of the 30S subunit. Is located at the subunit interface close to the decoding center, probably blocks exit of the E-site tRNA. In Bacillus licheniformis (strain ATCC 14580 / DSM 13 / JCM 2505 / CCUG 7422 / NBRC 12200 / NCIMB 9375 / NCTC 10341 / NRRL NRS-1264 / Gibson 46), this protein is Small ribosomal subunit protein uS7.